The primary structure comprises 490 residues: 4-hydroxybutyryl-CoA dehydratase/vinylacetyl-CoA-Delta-isomerase (490 aa).

[4Fe-4S] cluster is bound by residues cysteine 99 and cysteine 103. FAD is bound by residues 149–156 (MTDPKGDR) and 188–190 (HQT). Residues histidine 292 and cysteine 299 each coordinate [4Fe-4S] cluster. Residues histidine 325 and 386–390 (DIAGG) contribute to the FAD site.

In terms of assembly, homotetramer. It depends on FAD as a cofactor. [4Fe-4S] cluster serves as cofactor.

The enzyme catalyses 4-hydroxybutanoyl-CoA = (2E)-butenoyl-CoA + H2O. It carries out the reaction vinylacetyl-CoA = (2E)-butenoyl-CoA. Its function is as follows. Catalyzes the reversible conversion of 4-hydroxybutyryl-CoA to crotonyl-CoA. The mechanism of the reaction seems to go through three steps: (1) the FAD-dependent oxidation of 4-hydroxybutyryl-CoA to 4-hydroxycrotonyl-CoA; (2) the hydroxyl group is substituted by a hydride derived from the now reduced FAD in an SN2' reaction leading to vinylacetyl-CoA; (3) isomerization to yield crotonyl-CoA. The protein is 4-hydroxybutyryl-CoA dehydratase/vinylacetyl-CoA-Delta-isomerase (abfD) of Clostridium aminobutyricum.